The chain runs to 200 residues: LHFPL tetraspan subfamily member 6 protein (200 aa).

Positions 1–21 (MASSLTCAGVIWALLSFLCAA) are cleaved as a signal peptide. The next 2 helical transmembrane spans lie at 84–104 (ICTV…LTAI) and 123–143 (GIQF…PLGW). N-linked (GlcNAc...) asparagine glycosylation occurs at N154. The chain crosses the membrane as a helical span at residues 172-192 (CTGAGAAAAMVLCTWMACFAG).

This sequence belongs to the LHFP family.

It localises to the membrane. This is LHFPL tetraspan subfamily member 6 protein from Danio rerio (Zebrafish).